The following is a 578-amino-acid chain: Proline--tRNA ligase (578 aa).

The protein belongs to the class-II aminoacyl-tRNA synthetase family. ProS type 1 subfamily. As to quaternary structure, homodimer.

The protein localises to the cytoplasm. The enzyme catalyses tRNA(Pro) + L-proline + ATP = L-prolyl-tRNA(Pro) + AMP + diphosphate. Functionally, catalyzes the attachment of proline to tRNA(Pro) in a two-step reaction: proline is first activated by ATP to form Pro-AMP and then transferred to the acceptor end of tRNA(Pro). As ProRS can inadvertently accommodate and process non-cognate amino acids such as alanine and cysteine, to avoid such errors it has two additional distinct editing activities against alanine. One activity is designated as 'pretransfer' editing and involves the tRNA(Pro)-independent hydrolysis of activated Ala-AMP. The other activity is designated 'posttransfer' editing and involves deacylation of mischarged Ala-tRNA(Pro). The misacylated Cys-tRNA(Pro) is not edited by ProRS. The sequence is that of Proline--tRNA ligase from Burkholderia pseudomallei (strain K96243).